The chain runs to 287 residues: Large ribosomal subunit protein uL2 (287 aa).

The tract at residues 221-287 is disordered; sequence RGSVMNPCDH…SKRSRGGRDS (67 aa). A compositionally biased stretch (basic residues) spans 258 to 287; sequence KTRKRNKPSNKFVLRKRRKTSKRSRGGRDS.

This sequence belongs to the universal ribosomal protein uL2 family. In terms of assembly, part of the 50S ribosomal subunit. Forms a bridge to the 30S subunit in the 70S ribosome.

Functionally, one of the primary rRNA binding proteins. Required for association of the 30S and 50S subunits to form the 70S ribosome, for tRNA binding and peptide bond formation. It has been suggested to have peptidyltransferase activity; this is somewhat controversial. Makes several contacts with the 16S rRNA in the 70S ribosome. This is Large ribosomal subunit protein uL2 from Synechococcus sp. (strain CC9311).